Here is a 699-residue protein sequence, read N- to C-terminus: MPRENQKRGRRATEKAKKEASKRKRDEGIEEPTLKRLKPSADEDNAVTAGADYVPLEGEEYDDQYATGAADEMPFYGLLDSEEQEYFSRANEMLELNQFGDAEERRLFVDSVFREARGKELKIACSQSCSRLMEKLISVSDIHQIWRLFNKFIGHFLTLVQHRFASHCCERLFISAAPGVTQKASKTKSKKDDDIEMDEDEEPEPELPLAEMFMKVVEELQGNWGYLLTERFASHTIRVLLLVLAGEPVDVSSNDSVVASRKKERLGVVGGETQENNPSGEKRSVPESFEATLKKVMQDMVSVLDDTYLRALATHPVGNPVLQVLVRLELSHFGKSSAKQPTSIIKRLIPDENFEDDSETTRFIRGLLYDPVGSRLLETMVRCMPGKMFKSLYRNYLRDQMSSLARNQTAGYVVLRVLERLGRDDLHAVMEQIVPKIPSLIERSRTIVPKVLIERCLARGVDTKPIAKALESSYDSDPARRLEQMLRLETAMADNKEKSDKNGPPGESNPGSAAAEKLHGSLLAQTIVTAPGQLSELVFSSLLALSPEVLLSICKDPTASRVIQQALTSPASSPQFRRQFTTRFTSHMNELALDSSGSHVVDALWPATKDIYFIKERMAQELAQNELALRDSFVGRAVWRNWAMDLYKRRRGEWAAKAKGRDITNDSAEKPKSRLDMARARYAAKQSEATGANAVAAKQ.

Over residues 1–27 (MPRENQKRGRRATEKAKKEASKRKRDE) the composition is skewed to basic and acidic residues. A disordered region spans residues 1–47 (MPRENQKRGRRATEKAKKEASKRKRDEGIEEPTLKRLKPSADEDNAV). 2 Pumilio repeats span residues 115–150 (EARGKELKIACSQSCSRLMEKLISVSDIHQIWRLFN) and 151–186 (KFIGHFLTLVQHRFASHCCERLFISAAPGVTQKASK). Positions 184–204 (ASKTKSKKDDDIEMDEDEEPE) are disordered. The segment covering 194–204 (DIEMDEDEEPE) has biased composition (acidic residues). 2 Pumilio repeats span residues 359 to 394 (ETTRFIRGLLYDPVGSRLLETMVRCMPGKMFKSLYR) and 396 to 431 (YLRDQMSSLARNQTAGYVVLRVLERLGRDDLHAVME). The interval 494–514 (DNKEKSDKNGPPGESNPGSAA) is disordered. Pumilio repeat units lie at residues 544-581 (ALSPEVLLSICKDPTASRVIQQALTSPASSPQFRRQFT) and 583-620 (RFTSHMNELALDSSGSHVVDALWPATKDIYFIKERMAQ).

The protein belongs to the NOP9 family.

The protein localises to the nucleus. It localises to the nucleolus. In terms of biological role, RNA-binding nucleolar protein required for pre-rRNA processing. Involved in production of 18S rRNA and assembly of small ribosomal subunit. This is Nucleolar protein 9 (nop9) from Emericella nidulans (strain FGSC A4 / ATCC 38163 / CBS 112.46 / NRRL 194 / M139) (Aspergillus nidulans).